The chain runs to 553 residues: Probable inactive serine/threonine-protein kinase samkD (553 aa).

In terms of domain architecture, SAM spans 24–90 (WDNETVCKWL…FEYQILKNCY (67 aa)). The Protein kinase domain maps to 134–393 (YQYIETISKN…SKELLKSFWF (260 aa)). Residues 140–148 (ISKNKFCEI) and Lys-165 contribute to the ATP site.

The protein belongs to the protein kinase superfamily. Ser/Thr protein kinase family.

The polypeptide is Probable inactive serine/threonine-protein kinase samkD (samkD) (Dictyostelium discoideum (Social amoeba)).